Reading from the N-terminus, the 1334-residue chain is Putative transmembrane protein ORF1334 (1334 aa).

Residues Val-53–His-73 form a helical membrane-spanning segment. The disordered stretch occupies residues Leu-1107–Ser-1135. The span at Ser-1110–Ser-1135 shows a compositional bias: low complexity. Helical transmembrane passes span Ala-1256 to Ile-1276, Ile-1292 to Val-1312, and Tyr-1313 to Gln-1333.

It is found in the host membrane. The sequence is that of Putative transmembrane protein ORF1334 from Acidianus two-tailed virus (ATV).